A 228-amino-acid chain; its full sequence is MKTIGILGGMGPLATAELFRRIVIKTPAKRDQEHPKVIIFNNPQIPDRTAYILGKGEDPRPQLIWTAKRLEECGADFIIMPCNTAHAFVEDIRKAIKIPIISMIEETAKKVKELGFKKAGLLATTGTIVSGVYEKEFSKYGVEIMTPTEDEQKDVMRGIYEGVKAGNLKLGRELLLKTAKILEERGAECIIAGCTEVSVVLKQDDLKVPLIDPMDVIAEVAVKVALEK.

47–49 lines the substrate pocket; that stretch reads DRT. C82 (proton donor/acceptor) is an active-site residue. Substrate-binding positions include 83–85 and K164; that span reads NTA. Residue C194 is the Proton donor/acceptor of the active site.

Belongs to the aspartate/glutamate racemases family. In terms of assembly, homodimer. The existence of the interchain disulfide bond seen in the crystal structures is uncertain, but disulfide bonds have been reported for cytoplasmic proteins from thermophiles.

It carries out the reaction L-aspartate = D-aspartate. With respect to regulation, weakly inhibited by citrate, but not by asparagine. The polypeptide is Aspartate racemase (Pyrococcus horikoshii (strain ATCC 700860 / DSM 12428 / JCM 9974 / NBRC 100139 / OT-3)).